Reading from the N-terminus, the 350-residue chain is Solute carrier family 35 member E4 (350 aa).

The span at 19–30 (GAAAGGAQAAGP) shows a compositional bias: low complexity. The interval 19–42 (GAAAGGAQAAGPPEWPPGSPQALR) is disordered. Helical transmembrane passes span 51 to 71 (MAAL…KWIF), 73 to 93 (VHGF…AALA), 110 to 132 (VLLL…RAVP), 135 to 155 (LAQL…ALLL), 218 to 238 (VTLL…AALV), 258 to 278 (ILLS…LLAL), 279 to 299 (TSAL…LILS), and 312 to 332 (YVGI…EFVA). The region spanning 125-179 (NVGLRAVPLDLAQLVTTTTPLFTLALSALLLGRRHHPLQLAAMGPLCLGAACSLA) is the EamA domain.

Belongs to the TPT transporter family. SLC35E subfamily.

Its subcellular location is the membrane. Putative transporter. This is Solute carrier family 35 member E4 (SLC35E4) from Homo sapiens (Human).